The following is a 228-amino-acid chain: Small ribosomal subunit protein uS3 (228 aa).

Positions 39 to 107 (VREFIRERLK…PVHINIEEIR (69 aa)) constitute a KH type-2 domain.

It belongs to the universal ribosomal protein uS3 family. As to quaternary structure, part of the 30S ribosomal subunit. Forms a tight complex with proteins S10 and S14.

Functionally, binds the lower part of the 30S subunit head. Binds mRNA in the 70S ribosome, positioning it for translation. In Halorhodospira halophila (strain DSM 244 / SL1) (Ectothiorhodospira halophila (strain DSM 244 / SL1)), this protein is Small ribosomal subunit protein uS3.